Consider the following 843-residue polypeptide: Neuroligin-1 (843 aa).

The signal sequence occupies residues 1 to 45; sequence MALPRCMWPNYVWRAMMACVVHRGSGAPLTLCLLGCLLQTFHVLS. Over 46-697 the chain is Extracellular; that stretch reads QKLDDVDPLV…DQRDYSTELS (652 aa). A glycan (N-linked (GlcNAc...) (complex) asparagine) is linked at Asn-109. Cys-117 and Cys-153 are joined by a disulfide. Residues 167-190 are disordered; it reads LTKKHTDDLGDNDGAEDEDIRDSG. Acidic residues predominate over residues 175–186; the sequence is LGDNDGAEDEDI. N-linked (GlcNAc...) (complex) asparagine glycans are attached at residues Asn-303 and Asn-343. 2 disulfide bridges follow: Cys-342/Cys-353 and Cys-512/Cys-546. Asn-547 carries an N-linked (GlcNAc...) asparagine glycan. Positions 647–688 are disordered; sequence TKVPSTDITLRPTRKNSTPVTSAFPTAKQDDPKQQPSPFSVD. The span at 661–670 shows a compositional bias: polar residues; it reads KNSTPVTSAF. O-linked (GalNAc...) serine glycans are attached at residues Ser-683 and Ser-686. A helical membrane pass occupies residues 698–718; that stretch reads VTIAVGASLLFLNILAFAALY. Topologically, residues 719–843 are cytoplasmic; that stretch reads YKKDKRRHDV…HPHSHSTTRV (125 aa). The interval 822-843 is disordered; sequence GGQNNTLPHPHPHPHSHSTTRV. A compositionally biased stretch (basic residues) spans 831–843; sequence PHPHPHSHSTTRV.

This sequence belongs to the type-B carboxylesterase/lipase family. Interacts with neurexins NRXN1, NRXN2 and NRXN3. Interaction with neurexins is mediated by heparan sulfate glycan modification on neurexin. Interacts (via its C-terminus) with DLG4/PSD-95 (via PDZ domain 3). Interacts with AIP1, GOPC and PDZRN3. Interacts with NLGN3. Brain and arteries (at protein level). Expressed in olfactory bulb. Detected in brain.

The protein localises to the cell membrane. It localises to the postsynaptic density. The protein resides in the synaptic cleft. It is found in the synaptic cell membrane. Its function is as follows. Cell surface protein involved in cell-cell-interactions via its interactions with neurexin family members. Plays a role in synapse function and synaptic signal transmission, and probably mediates its effects by recruiting and clustering other synaptic proteins. May promote the initial formation of synapses, but is not essential for this. In vitro, triggers the de novo formation of presynaptic structures. May be involved in specification of excitatory synapses. Required to maintain wakefulness quality and normal synchrony of cerebral cortex activity during wakefulness and sleep. The protein is involved in nervous system development. The polypeptide is Neuroligin-1 (Nlgn1) (Mus musculus (Mouse)).